Reading from the N-terminus, the 934-residue chain is Sorting nexin-14 (934 aa).

2 helical membrane-spanning segments follow: residues Tyr27 to Tyr47 and Leu48 to Leu68. The region spanning Pro129 to Pro303 is the PXA domain. One can recognise an RGS domain in the interval Asp335–Leu467. Residues Trp557–Ser677 form the PX domain.

The protein belongs to the sorting nexin family.

It localises to the lysosome membrane. It is found in the late endosome membrane. The protein localises to the cell projection. Its subcellular location is the dendrite. In terms of biological role, plays a role in maintaining normal neuronal excitability and synaptic transmission. May be involved in several stages of intracellular trafficking. Required for autophagosome clearance, possibly by mediating the fusion of lysosomes with autophagosomes. Binds phosphatidylinositol 3,5-bisphosphate (PtdIns(3,5)P2), a key component of late endosomes/lysosomes. Does not bind phosphatidylinositol 3-phosphate (PtdIns(3P)). This chain is Sorting nexin-14, found in Danio rerio (Zebrafish).